Reading from the N-terminus, the 1119-residue chain is Isoleucine--tRNA ligase (1119 aa).

A disordered region spans residues 1–43; the sequence is MVPRRSRQRPASSCRTAKTARREMPYPLPAPDGQEPEAQPVTP. The 'HIGH' region signature appears at 84–94; the sequence is PFANGLPHYGH. A 'KMSKS' region motif is present at residues 676–680; sequence KVSKS. Lys-679 is a binding site for ATP.

This sequence belongs to the class-I aminoacyl-tRNA synthetase family. IleS type 2 subfamily. In terms of assembly, monomer. Requires Zn(2+) as cofactor.

The protein localises to the cytoplasm. The catalysed reaction is tRNA(Ile) + L-isoleucine + ATP = L-isoleucyl-tRNA(Ile) + AMP + diphosphate. Its function is as follows. Catalyzes the attachment of isoleucine to tRNA(Ile). As IleRS can inadvertently accommodate and process structurally similar amino acids such as valine, to avoid such errors it has two additional distinct tRNA(Ile)-dependent editing activities. One activity is designated as 'pretransfer' editing and involves the hydrolysis of activated Val-AMP. The other activity is designated 'posttransfer' editing and involves deacylation of mischarged Val-tRNA(Ile). The sequence is that of Isoleucine--tRNA ligase from Leifsonia xyli subsp. xyli (strain CTCB07).